The following is a 530-amino-acid chain: White collar 2 protein (530 aa).

A run of 7 repeats spans residues 9 to 12, 21 to 24, 25 to 28, 29 to 32, 33 to 36, 37 to 40, and 41 to 44. Residues 9–44 are 7 X 4 AA repeats of G-[SAT]-G-M; the sequence is GSSMYGFGAMGMGSGMGSGMGSGMGTGMGTGMGTGM. The segment at 134-158 is disordered; that stretch reads IATPTTTTSGPSGGPSSGGGSTLTE. Positions 144-154 are enriched in gly residues; sequence PSGGPSSGGGS. One can recognise a PAS domain in the interval 162–232; sequence RRNWPAKVVE…AELNEAIATG (71 aa). The segment at 315–343 is disordered; the sequence is REEQEEQEESHRTWRMSQEGRSDVTPSDD. A GATA-type zinc finger spans residues 468–493; that stretch reads CTDCGTLDSPEWRKGPSGPKTLCNAC. The interval 504–530 is disordered; it reads KNANNNNNGGGIGGHNDIHTPMGDHMG.

In terms of assembly, heterodimer of wc-1 and wc-2 (Potential). Binds to DNA.

It is found in the nucleus. In terms of biological role, may function as a transcription factor involved in light regulation. Binds and affects blue light regulation of the al-3 gene. Wc-1 and wc-2 interact via homologous PAS domains, bind to promoters of light regulated genes such as frq, and activate transcription. May bind directly to frq. The polypeptide is White collar 2 protein (wc-2) (Neurospora crassa (strain ATCC 24698 / 74-OR23-1A / CBS 708.71 / DSM 1257 / FGSC 987)).